The chain runs to 111 residues: Protein BEX5 (111 aa).

Basic and acidic residues predominate over residues 1-12; that stretch reads MENVPKENKVVE. Residues 1–37 are disordered; that stretch reads MENVPKENKVVEKAPVQNEAPALGGGEYQEPGGNVKG. The interval 100–104 is his cluster; the sequence is HHDHH. Cysteine 108 contributes to the Zn(2+) binding site.

It belongs to the BEX family. Ubiquitinated. Degraded by the proteasome.

It localises to the cytoplasm. The chain is Protein BEX5 (BEX5) from Homo sapiens (Human).